A 423-amino-acid chain; its full sequence is MRNYIKDAADLDEVELSGWAEDIRRIKSIVFIILRDVTGRIQVTVKSENVKNFDEVYKINRESVLKVHGTVDHQSRSKSGIEIIADSVEILNAAEAPLPLGVVDKVQADLDTRLNNRYIDLRKDENLIIFKAQSTLLWGIREYLNRLGFIEVHTPKIVAAATEGGADLFPVKYFERDAYLNQSPQLYKEILMAAGFEKVFEVGPAFRAEKENTLRHLNEFTSIDIEMSFADHNDVMDVLENTVKNAINTLKNNLGDELNKHGFNIDSINGRIPRITYREAIDYLNSSGFQMNFGDDFSPEAARVLGERYKSFYFITEWPVSLRPFYTMKKDDETTKSFDLQLRELEICSGAQRIHRYDDLVNNIKNKGLNPESFTFYLSAFRYGMPPHAGWAIGLERLTMNLLGIKNVRETTLFPRDRTRLLP.

E163 serves as a coordination point for L-aspartate. Residues 185–188 (QLYK) are aspartate. Residue R207 coordinates L-aspartate. ATP-binding positions include 207 to 209 (RAE), 215 to 217 (RHL), and E346. Positions 346 and 349 each coordinate Mg(2+). The L-aspartate site is built by S349 and R353. An ATP-binding site is contributed by 394–397 (GLER).

Belongs to the class-II aminoacyl-tRNA synthetase family. Type 2 subfamily. In terms of assembly, homodimer. It depends on Mg(2+) as a cofactor.

It is found in the cytoplasm. The catalysed reaction is tRNA(Asp) + L-aspartate + ATP = L-aspartyl-tRNA(Asp) + AMP + diphosphate. Catalyzes the attachment of L-aspartate to tRNA(Asp) in a two-step reaction: L-aspartate is first activated by ATP to form Asp-AMP and then transferred to the acceptor end of tRNA(Asp). The sequence is that of Aspartate--tRNA(Asp) ligase from Picrophilus torridus (strain ATCC 700027 / DSM 9790 / JCM 10055 / NBRC 100828 / KAW 2/3).